Here is a 392-residue protein sequence, read N- to C-terminus: S-adenosylmethionine synthase (392 aa).

Histidine 20 lines the ATP pocket. Aspartate 22 contributes to the Mg(2+) binding site. Glutamate 48 lines the K(+) pocket. L-methionine-binding residues include glutamate 61 and glutamine 106. Residues 106-116 (QSQDIINAIKK) form a flexible loop region. Residues 171–173 (DSK), aspartate 248, 254–255 (RK), alanine 271, and lysine 275 each bind ATP. Aspartate 248 provides a ligand contact to L-methionine. Lysine 279 is an L-methionine binding site.

Belongs to the AdoMet synthase family. In terms of assembly, homotetramer; dimer of dimers. Mg(2+) is required as a cofactor. K(+) serves as cofactor.

It localises to the cytoplasm. It catalyses the reaction L-methionine + ATP + H2O = S-adenosyl-L-methionine + phosphate + diphosphate. The protein operates within amino-acid biosynthesis; S-adenosyl-L-methionine biosynthesis; S-adenosyl-L-methionine from L-methionine: step 1/1. In terms of biological role, catalyzes the formation of S-adenosylmethionine (AdoMet) from methionine and ATP. The overall synthetic reaction is composed of two sequential steps, AdoMet formation and the subsequent tripolyphosphate hydrolysis which occurs prior to release of AdoMet from the enzyme. The protein is S-adenosylmethionine synthase of Borrelia garinii subsp. bavariensis (strain ATCC BAA-2496 / DSM 23469 / PBi) (Borreliella bavariensis).